Reading from the N-terminus, the 432-residue chain is Glutamate-gated chloride channel subunit beta (432 aa).

The first 18 residues, 1 to 18 (MSQYMMVAVAAVVAVAGS), serve as a signal peptide directing secretion. Residues 19–249 (SQISRRSTGG…MQLTLKRQFS (231 aa)) are Extracellular-facing. An N-linked (GlcNAc...) asparagine glycan is attached at Asn52. L-glutamate-binding residues include Arg69, Arg88, and Ser155. A disulfide bridge connects residues Cys164 and Cys178. Ser184 contacts L-glutamate. Asn219 is a glycosylation site (N-linked (GlcNAc...) asparagine). Cys226 and Cys237 are oxidised to a cystine. The helical transmembrane segment at 250-272 (YYLVQLYGPTTMIVIVSWVSFWI) threads the bilayer. Over 273–277 (DMHST) the chain is Cytoplasmic. A helical membrane pass occupies residues 278–299 (AGRVALGVTTLLTMTTMQAAIN). The Extracellular segment spans residues 300–306 (AKLPPVS). A helical transmembrane segment spans residues 307-327 (YVKVVDVWLGACQTFVFGALL). Residues 328-402 (EYAFVSYQDS…KPDYLPAKID (75 aa)) lie on the Cytoplasmic side of the membrane. The helical transmembrane segment at 403–426 (YYARFCVPLGFLAFNAIYWTSCLV) threads the bilayer. Residues 427 to 432 (MVSRLV) lie on the Extracellular side of the membrane.

This sequence belongs to the ligand-gated ion channel (TC 1.A.9) family. Glutamate-gated chloride channel (TC 1.A.9.4) subfamily. As to quaternary structure, pentamer. As to expression, expressed in motor neuron commissures at the anterior portion of the worms.

The protein localises to the postsynaptic cell membrane. It localises to the cell membrane. Glutamate-gated chloride channel subunit; channel properties may be modulated by the formation of heteromeric channels. Glutamate binding triggers a rapidly reversible current, while the anti-helmintic drug ivermectin triggers a permanently open channel configuration. This Haemonchus contortus (Barber pole worm) protein is Glutamate-gated chloride channel subunit beta.